Reading from the N-terminus, the 600-residue chain is NADH-quinone oxidoreductase subunit C/D (600 aa).

The interval 1–190 (MVNNMTDLTA…SPFELTKAKQ (190 aa)) is NADH dehydrogenase I subunit C. An NADH dehydrogenase I subunit D region spans residues 214–600 (DFMFLNLGPN…IDFVMSDVDR (387 aa)).

It in the N-terminal section; belongs to the complex I 30 kDa subunit family. In the C-terminal section; belongs to the complex I 49 kDa subunit family. NDH-1 is composed of 13 different subunits. Subunits NuoB, CD, E, F, and G constitute the peripheral sector of the complex.

It localises to the cell inner membrane. It catalyses the reaction a quinone + NADH + 5 H(+)(in) = a quinol + NAD(+) + 4 H(+)(out). Its function is as follows. NDH-1 shuttles electrons from NADH, via FMN and iron-sulfur (Fe-S) centers, to quinones in the respiratory chain. The immediate electron acceptor for the enzyme in this species is believed to be ubiquinone. Couples the redox reaction to proton translocation (for every two electrons transferred, four hydrogen ions are translocated across the cytoplasmic membrane), and thus conserves the redox energy in a proton gradient. This is NADH-quinone oxidoreductase subunit C/D from Escherichia coli O6:H1 (strain CFT073 / ATCC 700928 / UPEC).